A 39-amino-acid polypeptide reads, in one-letter code: Cytochrome b559 subunit beta (39 aa).

The helical transmembrane segment at 14 to 30 (WLAVHGLAVPTVFFLGS) threads the bilayer. Histidine 18 lines the heme pocket.

This sequence belongs to the PsbE/PsbF family. In terms of assembly, heterodimer of an alpha subunit and a beta subunit. PSII is composed of 1 copy each of membrane proteins PsbA, PsbB, PsbC, PsbD, PsbE, PsbF, PsbH, PsbI, PsbJ, PsbK, PsbL, PsbM, PsbT, PsbX, PsbY, PsbZ, Psb30/Ycf12, at least 3 peripheral proteins of the oxygen-evolving complex and a large number of cofactors. It forms dimeric complexes. Requires heme b as cofactor.

It is found in the plastid. The protein resides in the chloroplast thylakoid membrane. This b-type cytochrome is tightly associated with the reaction center of photosystem II (PSII). PSII is a light-driven water:plastoquinone oxidoreductase that uses light energy to abstract electrons from H(2)O, generating O(2) and a proton gradient subsequently used for ATP formation. It consists of a core antenna complex that captures photons, and an electron transfer chain that converts photonic excitation into a charge separation. In Cedrus deodara (Deodar cedar), this protein is Cytochrome b559 subunit beta.